A 426-amino-acid chain; its full sequence is Glutamate-1-semialdehyde 2,1-aminomutase (426 aa).

An N6-(pyridoxal phosphate)lysine modification is found at lysine 265.

Belongs to the class-III pyridoxal-phosphate-dependent aminotransferase family. HemL subfamily. Homodimer. It depends on pyridoxal 5'-phosphate as a cofactor.

The protein resides in the cytoplasm. It catalyses the reaction (S)-4-amino-5-oxopentanoate = 5-aminolevulinate. It participates in porphyrin-containing compound metabolism; protoporphyrin-IX biosynthesis; 5-aminolevulinate from L-glutamyl-tRNA(Glu): step 2/2. This is Glutamate-1-semialdehyde 2,1-aminomutase from Enterobacter sp. (strain 638).